The sequence spans 1042 residues: Probable serine/threonine protein kinase IRE4 (1042 aa).

Basic and acidic residues-rich tracts occupy residues Met-1 to Gly-10, Glu-102 to Glu-115, and Gln-314 to Lys-327. Disordered regions lie at residues Met-1 to Leu-75, Pro-90 to Glu-115, and Trp-297 to Lys-327. The C2H2-type; atypical zinc finger occupies Cys-402 to Cys-421. A Protein kinase domain is found at Phe-670–Phe-955. Residues Ile-676–Val-684 and Lys-699 contribute to the ATP site. Asp-793 acts as the Proton acceptor in catalysis. Residues Glu-830–Arg-850 are disordered. The residue at position 854 (Ser-854) is a Phosphoserine. The AGC-kinase C-terminal domain maps to Gln-956–Phe-1042.

The protein belongs to the protein kinase superfamily. AGC Ser/Thr protein kinase family.

It carries out the reaction L-seryl-[protein] + ATP = O-phospho-L-seryl-[protein] + ADP + H(+). The catalysed reaction is L-threonyl-[protein] + ATP = O-phospho-L-threonyl-[protein] + ADP + H(+). This chain is Probable serine/threonine protein kinase IRE4, found in Arabidopsis thaliana (Mouse-ear cress).